Here is a 379-residue protein sequence, read N- to C-terminus: UDP-N-acetylglucosamine--N-acetylmuramyl-(pentapeptide) pyrophosphoryl-undecaprenol N-acetylglucosamine transferase (379 aa).

UDP-N-acetyl-alpha-D-glucosamine contacts are provided by residues threonine 17–glycine 19, asparagine 128, arginine 169, serine 197, and glutamine 298.

The protein belongs to the glycosyltransferase 28 family. MurG subfamily.

Its subcellular location is the cell inner membrane. It carries out the reaction di-trans,octa-cis-undecaprenyl diphospho-N-acetyl-alpha-D-muramoyl-L-alanyl-D-glutamyl-meso-2,6-diaminopimeloyl-D-alanyl-D-alanine + UDP-N-acetyl-alpha-D-glucosamine = di-trans,octa-cis-undecaprenyl diphospho-[N-acetyl-alpha-D-glucosaminyl-(1-&gt;4)]-N-acetyl-alpha-D-muramoyl-L-alanyl-D-glutamyl-meso-2,6-diaminopimeloyl-D-alanyl-D-alanine + UDP + H(+). It participates in cell wall biogenesis; peptidoglycan biosynthesis. Cell wall formation. Catalyzes the transfer of a GlcNAc subunit on undecaprenyl-pyrophosphoryl-MurNAc-pentapeptide (lipid intermediate I) to form undecaprenyl-pyrophosphoryl-MurNAc-(pentapeptide)GlcNAc (lipid intermediate II). This chain is UDP-N-acetylglucosamine--N-acetylmuramyl-(pentapeptide) pyrophosphoryl-undecaprenol N-acetylglucosamine transferase, found in Brucella canis (strain ATCC 23365 / NCTC 10854 / RM-666).